A 349-amino-acid polypeptide reads, in one-letter code: Isopentenyl-diphosphate delta-isomerase (349 aa).

Residue 6-7 (RK) participates in substrate binding. FMN is bound by residues 62–64 (AMT), serine 93, and asparagine 122. Residue glutamine 152 participates in substrate binding. Glutamate 153 is a binding site for Mg(2+). FMN is bound by residues lysine 184, threonine 214, 258 to 259 (GG), and 280 to 281 (AG).

It belongs to the IPP isomerase type 2 family. In terms of assembly, homooctamer. Dimer of tetramers. FMN is required as a cofactor. Requires NADPH as cofactor. Mg(2+) serves as cofactor.

Its subcellular location is the cytoplasm. It catalyses the reaction isopentenyl diphosphate = dimethylallyl diphosphate. In terms of biological role, involved in the biosynthesis of isoprenoids. Catalyzes the 1,3-allylic rearrangement of the homoallylic substrate isopentenyl (IPP) to its allylic isomer, dimethylallyl diphosphate (DMAPP). The polypeptide is Isopentenyl-diphosphate delta-isomerase (Bacillus cereus (strain ATCC 14579 / DSM 31 / CCUG 7414 / JCM 2152 / NBRC 15305 / NCIMB 9373 / NCTC 2599 / NRRL B-3711)).